The primary structure comprises 242 residues: N-alpha-acetyltransferase 60 (242 aa).

Over 1 to 192 the chain is Cytoplasmic; it reads MTEVVPSSAL…GGHPPWTILD (192 aa). Positions 13–182 constitute an N-acetyltransferase domain; sequence VSLRLLCHDD…DGFTYVLYIN (170 aa). Tyr-38 contacts substrate. At Lys-79 the chain carries N6-acetyllysine; by autocatalysis. Residue Tyr-97 is part of the active site. Leu-99 provides a ligand contact to substrate. Residue 101–103 participates in acetyl-CoA binding; the sequence is LGV. 3 positions are modified to N6-acetyllysine; by autocatalysis: Lys-105, Lys-109, and Lys-121. 109-114 contributes to the acetyl-CoA binding site; that stretch reads KHGIGS. His-138 is a catalytic residue. Acetyl-CoA contacts are provided by residues Asn-143 and 150-153; that span reads YENR. The tract at residues 162–173 is required for homodimerization; it reads PYYYSIRGVLKD. Tyr-165 contacts substrate. The segment at residues 193–236 is an intramembrane region (helical); it reads YIQHLGSALANLSPCSIPHRIYRQAHSLLCSFLPWSSISSKGGI. Residues 237-242 lie on the Cytoplasmic side of the membrane; the sequence is EYSRTM.

It belongs to the acetyltransferase family. NAA60 subfamily. As to quaternary structure, monomer and homodimer; monomer in presence of substrate and homodimer in its absence. In terms of processing, acetylated: autoacetylation is required for optimal acetyltransferase activity.

It localises to the golgi apparatus membrane. It catalyses the reaction N-terminal L-methionyl-[transmembrane protein] + acetyl-CoA = N-terminal N(alpha)-acetyl-L-methionyl-[transmembrane protein] + CoA + H(+). It carries out the reaction L-lysyl-[protein] + acetyl-CoA = N(6)-acetyl-L-lysyl-[protein] + CoA + H(+). N-alpha-acetyltransferase that specifically mediates the acetylation of N-terminal residues of the transmembrane proteins, with a strong preference for N-termini facing the cytosol. Displays N-terminal acetyltransferase activity towards a range of N-terminal sequences including those starting with Met-Lys, Met-Val, Met-Ala and Met-Met. Required for normal chromosomal segregation during anaphase. May also show histone acetyltransferase activity; such results are however unclear in vivo and would require additional experimental evidences. The sequence is that of N-alpha-acetyltransferase 60 (Naa60) from Rattus norvegicus (Rat).